Reading from the N-terminus, the 379-residue chain is UDP-N-acetylglucosamine--N-acetylmuramyl-(pentapeptide) pyrophosphoryl-undecaprenol N-acetylglucosamine transferase (379 aa).

Residues 17–19, asparagine 128, arginine 169, serine 197, and glutamine 298 each bind UDP-N-acetyl-alpha-D-glucosamine; that span reads TGG.

This sequence belongs to the glycosyltransferase 28 family. MurG subfamily.

The protein resides in the cell inner membrane. The catalysed reaction is di-trans,octa-cis-undecaprenyl diphospho-N-acetyl-alpha-D-muramoyl-L-alanyl-D-glutamyl-meso-2,6-diaminopimeloyl-D-alanyl-D-alanine + UDP-N-acetyl-alpha-D-glucosamine = di-trans,octa-cis-undecaprenyl diphospho-[N-acetyl-alpha-D-glucosaminyl-(1-&gt;4)]-N-acetyl-alpha-D-muramoyl-L-alanyl-D-glutamyl-meso-2,6-diaminopimeloyl-D-alanyl-D-alanine + UDP + H(+). The protein operates within cell wall biogenesis; peptidoglycan biosynthesis. Functionally, cell wall formation. Catalyzes the transfer of a GlcNAc subunit on undecaprenyl-pyrophosphoryl-MurNAc-pentapeptide (lipid intermediate I) to form undecaprenyl-pyrophosphoryl-MurNAc-(pentapeptide)GlcNAc (lipid intermediate II). This chain is UDP-N-acetylglucosamine--N-acetylmuramyl-(pentapeptide) pyrophosphoryl-undecaprenol N-acetylglucosamine transferase, found in Brucella abortus (strain S19).